Reading from the N-terminus, the 458-residue chain is Phosphomethylpyrimidine synthase (458 aa).

Substrate-binding positions include Asn80, Met109, Tyr139, His175, 195–197, 236–239, and Glu275; these read SRG and DSLR. His279 is a binding site for Zn(2+). Tyr302 lines the substrate pocket. His343 contributes to the Zn(2+) binding site. [4Fe-4S] cluster-binding residues include Cys423, Cys426, and Cys431.

It belongs to the ThiC family. [4Fe-4S] cluster is required as a cofactor.

The catalysed reaction is 5-amino-1-(5-phospho-beta-D-ribosyl)imidazole + S-adenosyl-L-methionine = 4-amino-2-methyl-5-(phosphooxymethyl)pyrimidine + CO + 5'-deoxyadenosine + formate + L-methionine + 3 H(+). Its pathway is cofactor biosynthesis; thiamine diphosphate biosynthesis. Functionally, catalyzes the synthesis of the hydroxymethylpyrimidine phosphate (HMP-P) moiety of thiamine from aminoimidazole ribotide (AIR) in a radical S-adenosyl-L-methionine (SAM)-dependent reaction. The protein is Phosphomethylpyrimidine synthase of Cyanothece sp. (strain PCC 7425 / ATCC 29141).